Consider the following 248-residue polypeptide: 5'-nucleotidase SurE (248 aa).

A divalent metal cation-binding residues include Asp-8, Asp-9, Ser-39, and Asn-91.

Belongs to the SurE nucleotidase family. A divalent metal cation serves as cofactor.

The protein localises to the cytoplasm. The enzyme catalyses a ribonucleoside 5'-phosphate + H2O = a ribonucleoside + phosphate. In terms of biological role, nucleotidase that shows phosphatase activity on nucleoside 5'-monophosphates. The polypeptide is 5'-nucleotidase SurE (Neisseria gonorrhoeae (strain ATCC 700825 / FA 1090)).